The sequence spans 486 residues: Ty transcription activator TEC1 (486 aa).

An N-acetylserine modification is found at S2. The TEA DNA-binding region spans 125 to 199 (WTIGCDKWSE…QVWKKTIQNK (75 aa)). The residue at position 325 (S325) is a Phosphoserine. 2 disordered regions span residues 372–410 (EHES…SRPV) and 465–486 (HYEH…GNFY). The span at 377-388 (PEFSSNSNSGSE) shows a compositional bias: low complexity. Residues 472–486 (QRNFTPSNQSHGNFY) are compositionally biased toward polar residues.

This sequence belongs to the TEC1 family.

The protein localises to the nucleus. In terms of biological role, TEC1 is involved in the activation of TY1 and TY1-mediated gene expression. It is not involved in mating or sporulation processes. In Saccharomyces cerevisiae (strain ATCC 204508 / S288c) (Baker's yeast), this protein is Ty transcription activator TEC1 (TEC1).